The chain runs to 289 residues: LysM and putative peptidoglycan-binding domain-containing protein 4 (289 aa).

The disordered stretch occupies residues 1–23 (MRLREGPTHSFQPPSSVHSSLGS). The Extracellular segment spans residues 1-208 (MRLREGPTHS…PASGADWGIR (208 aa)). A compositionally biased stretch (polar residues) spans 9–23 (HSFQPPSSVHSSLGS). 2 N-linked (GlcNAc...) asparagine glycosylation sites follow: N30 and N59. The LysM domain occupies 71 to 115 (LERAITEDDNLNKLALQYGCKVSDIKRVNNLITDQDIYALKTIKI). N-linked (GlcNAc...) asparagine glycosylation is found at N134 and N178. A helical membrane pass occupies residues 209-229 (WWNAVFIMLLVGIVLPVFYIV). Topologically, residues 230–289 (YFKTQGDSEGTFSIEGRTNVSTSLSPHTNTGHSMEQMTQRTSGFSPGLLQDTHKLLNPGG) are cytoplasmic. The interval 252–272 (SLSPHTNTGHSMEQMTQRTSG) is disordered.

The protein resides in the membrane. This chain is LysM and putative peptidoglycan-binding domain-containing protein 4 (lysmd4), found in Xenopus laevis (African clawed frog).